A 1311-amino-acid polypeptide reads, in one-letter code: Zinc finger protein 423 (1311 aa).

A compositionally biased stretch (basic residues) spans 1 to 11 (MSRRKQAKPRS). Disordered stretches follow at residues 1–21 (MSRRKQAKPRSVKVEEGEASD), 34–70 (GGLEGESECDRKSSRALEDRNSVTSQEERNEDDEDVE), and 95–123 (AHRCPGDGDDDPQLSWVASSPSSKDVASP). Over residues 41 to 54 (ECDRKSSRALEDRN) the composition is skewed to basic and acidic residues. 2 positions are modified to phosphoserine: S55 and S58. The segment at 75–101 (YTCDHCQQDFESLADLTDHRAHRCPGD) adopts a C2H2-type 1; degenerate zinc-finger fold. The span at 110–123 (WVASSPSSKDVASP) shows a compositional bias: polar residues. 7 consecutive C2H2-type zinc fingers follow at residues 146–168 (YPCQFCDKSFIRLSYLKRHEQIH), 174–196 (FKCTFCSRLFKHKRSRDRHIKLH), 202–224 (YHCHECEAAFSRRDHLKIHLKTH), 230–252 (FKCSVCKRGFSSTSSLQSHMQAH), 271–294 (FMCDYCEDTFSQTEELEKHVLTLH), 303–326 (LQCIHCPEVFVDESTLLAHIHQAH), and 331–353 (HKCPMCPEQFSSVEGVYCHLDSH). Residues 354 to 426 (RQPDSSNHSV…PLRGQKKMRD (73 aa)) form a disordered region. Residues 373-382 (ASMSSATPDS) are compositionally biased toward polar residues. A compositionally biased stretch (low complexity) spans 390–404 (SVASMSSATPDSSAS). The segment at 436–460 (YSCPYCSKRDFTSLAVLEIHLKTIH) adopts a C2H2-type 9; degenerate zinc-finger fold. 3 C2H2-type zinc fingers span residues 468-491 (HTCQICLDSMPTLYNLNEHVRKLH), 507-530 (FHCNYCPEMFADINSLQEHIRVSH), and 544-567 (FFCNQCSMGFLTESSLTEHIQQAH). A C2H2-type 13; atypical zinc finger spans residues 590–615 (YSCPYCTNSPIFGSILKLTKHIKENH). The tract at residues 617 to 654 (NIPLAHSKKSKAEQSPVSSDVEVSSPKRQRLSGSANSI) is disordered. Residue S631 is modified to Phosphoserine. A compositionally biased stretch (low complexity) spans 631-642 (SPVSSDVEVSSP). 7 consecutive C2H2-type zinc fingers follow at residues 659–681 (YPCNQCDLKFSNFESFQTHLKLH), 689–711 (QACPQCKEDFDSQESLLQHLTVH), 719–742 (YVCESCDKQFSSVDDLQKHLLDMH), 747–770 (YHCTLCQEVFDSKVSIQVHLAVKH), 777–800 (YRCTACNWDFRKEADLQVHVKHSH), 808–830 (HKCIFCGETFSTEVELQCHITTH), and 834–857 (YNCRFCSKAFHAVLLLEKHLREKH). The C2H2-type 21; degenerate zinc-finger motif lies at 913 to 935 (YGCDICGAAYTMEVLLQNHRLRD). 3 C2H2-type zinc fingers span residues 957–979 (HKCNVCSRTFFSENGLREHLQTH), 986–1008 (YMCPICGERFPSLLTLTEHKVTH), and 1047–1069 (FRCVVCMQTVTSTLELKIHGTFH). Position 1081 is a phosphoserine (S1081). The segment at 1091–1109 (YKCALCLKEFRSKQDLVRL) adopts a C2H2-type 25; degenerate zinc-finger fold. 5 consecutive C2H2-type zinc fingers follow at residues 1147 to 1170 (LRCPECNVKFESAEDLESHMQVDH), 1195 to 1217 (YQCIKCQMTFENEREIQIHVANH), 1225 to 1247 (HECKLCNQMFDSPAKLLCHLIEH), 1256 to 1279 (FKCPVCFTVFVQANKLQQHIFAVH), and 1286 to 1309 (YDCSQCPQKFFFQTELQNHTMSQH). The segment covering 1163–1174 (ESHMQVDHRDLT) has biased composition (basic and acidic residues). The disordered stretch occupies residues 1163-1190 (ESHMQVDHRDLTPETSGPRKGAQTSPVP).

It belongs to the krueppel C2H2-type zinc-finger protein family. In terms of assembly, homodimer. Interacts with PARP1, SMAD1 and SMAD4. Interacts with EBF1. Interacts with CEP290. In terms of tissue distribution, expressed in brain, eye, olfactory epithelium, spleen and heart. Expressed in the basal layer, consisting of neural precursor cells and immature sensory neurons of the olfactory epithelium, but not in the mature receptor cells.

It is found in the nucleus. Transcription factor that can both act as an activator or a repressor depending on the context. Plays a central role in BMP signaling and olfactory neurogenesis. Associates with SMADs in response to BMP2 leading to activate transcription of BMP target genes. Acts as a transcriptional repressor via its interaction with EBF1, a transcription factor involved in terminal olfactory receptor neurons differentiation; this interaction preventing EBF1 to bind DNA and activate olfactory-specific genes. Involved in olfactory neurogenesis by participating in a developmental switch that regulates the transition from differentiation to maturation in olfactory receptor neurons. Controls proliferation and differentiation of neural precursors in cerebellar vermis formation. This Rattus norvegicus (Rat) protein is Zinc finger protein 423 (Znf423).